A 582-amino-acid chain; its full sequence is Sulfite reductase [NADPH] hemoprotein beta-component (582 aa).

Basic and acidic residues predominate over residues 1–12 (MDLKVKVDRSRD). The interval 1-26 (MDLKVKVDRSRDVSQPLDKLGPDETL) is disordered. Cysteine 447, cysteine 453, cysteine 492, and cysteine 496 together coordinate [4Fe-4S] cluster. A siroheme-binding site is contributed by cysteine 496.

The protein belongs to the nitrite and sulfite reductase 4Fe-4S domain family. In terms of assembly, alpha(8)-beta(8). The alpha component is a flavoprotein, the beta component is a hemoprotein. The cofactor is siroheme. It depends on [4Fe-4S] cluster as a cofactor.

The catalysed reaction is hydrogen sulfide + 3 NADP(+) + 3 H2O = sulfite + 3 NADPH + 4 H(+). It participates in sulfur metabolism; hydrogen sulfide biosynthesis; hydrogen sulfide from sulfite (NADPH route): step 1/1. Its function is as follows. Component of the sulfite reductase complex that catalyzes the 6-electron reduction of sulfite to sulfide. This is one of several activities required for the biosynthesis of L-cysteine from sulfate. The sequence is that of Sulfite reductase [NADPH] hemoprotein beta-component from Afipia carboxidovorans (strain ATCC 49405 / DSM 1227 / KCTC 32145 / OM5) (Oligotropha carboxidovorans).